The chain runs to 526 residues: Hyaluronidase-5 (526 aa).

The first 35 residues, 1 to 35 (MRVLYFKHSFFRSLLKSNGLPQTLLVFLLIPCYLT), serve as a signal peptide directing secretion. Cystine bridges form between C60–C351, C223–C237, C376–C387, C381–C435, and C437–C443. The active-site Proton donor is the E147. Residues N165 and N179 are each glycosylated (N-linked (GlcNAc...) asparagine).

The protein belongs to the glycosyl hydrolase 56 family. In terms of tissue distribution, expressed in testis, epididymal sperm and epididymides (at protein level). Expressed at highest levels in testis with lesser amounts in epididymal sperm.

Its subcellular location is the cell membrane. The protein resides in the cytoplasmic vesicle. It localises to the secretory vesicle. The protein localises to the acrosome membrane. It is found in the secreted. It carries out the reaction Random hydrolysis of (1-&gt;4)-linkages between N-acetyl-beta-D-glucosamine and D-glucuronate residues in hyaluronate.. Catalyzes the hydrolysis of hyaluronan into smaller oligosaccharide fragments. Does not appear to be essential for fertilization. The chain is Hyaluronidase-5 from Mus musculus (Mouse).